Consider the following 772-residue polypeptide: A type blood N-acetyl-alpha-D-galactosamine deacetylase (772 aa).

The N-terminal stretch at Met-1 to Ala-27 is a signal peptide. The substrate site is built by Ser-87 and His-123. Asp-126 is an a divalent metal cation binding site. Residues Trp-180–Phe-402 are deacetylase activity. Tyr-236 is a substrate binding site. His-278 is a binding site for a divalent metal cation. Positions Ser-494 to Trp-605 constitute an F5/8 type C domain. A CBM32 carbohydrate-binding domain region spans residues Val-502–Asp-765. Residues Thr-515–Glu-772 are not required for activity on soluble substrates.

A divalent metal cation is required as a cofactor.

It catalyses the reaction an N-acetyl-alpha-D-galactosaminyl-(1-&gt;3)-[alpha-L-fucosyl-(1-&gt;2)]-beta-D-galactosyl derivative + H2O = an alpha-D-galactosaminyl-(1-&gt;3)-[alpha-L-fucosyl-(1-&gt;2)]-beta-D-galactosyl derivative + acetate. Inhibited by EDTA. In terms of biological role, one of an enzyme pair that work together to convert the A antigen to the H antigen of the O blood type, which together release galactosamine. Catalyzes the first step in the conversion, generating the substrate for the subsequent enzyme (FpGalNase, AC P0DTR5). Works on many different A antigen subtypes. Glu-90 probably activates a nucleophilic water molecule to start the deacetylation reaction. The polypeptide is A type blood N-acetyl-alpha-D-galactosamine deacetylase (Flavonifractor plautii (Fusobacterium plautii)).